Reading from the N-terminus, the 166-residue chain is MELDLALDREEGALQASEIGDLLDETVWLQQLEHWLQIVCGDESLDCPTLVRSAEELSLGLRFIDDATIADLNSTWRQKTGPTDVLSFAALDDAGDWMEGPSIELGDIVVSLETARRQAQEQGHSLQQELRWLVSHGLLHLLGWDHPDEKSLATMLALQERLLGDG.

Positions 136, 140, and 146 each coordinate Zn(2+).

It belongs to the endoribonuclease YbeY family. The cofactor is Zn(2+).

The protein localises to the cytoplasm. Single strand-specific metallo-endoribonuclease involved in late-stage 70S ribosome quality control and in maturation of the 3' terminus of the 16S rRNA. The sequence is that of Endoribonuclease YbeY from Synechococcus sp. (strain CC9605).